The primary structure comprises 301 residues: Mitochondrial carnitine/acylcarnitine carrier protein (301 aa).

N-acetylalanine is present on alanine 2. At alanine 2–lysine 12 the chain is on the cytoplasmic side. Solcar repeat units lie at residues isoleucine 8 to leucine 99, leucine 108 to isoleucine 196, and leucine 207 to phenylalanine 293. The helical transmembrane segment at asparagine 13–leucine 31 threads the bilayer. At aspartate 32 to arginine 73 the chain is on the mitochondrial matrix side. Residues glycine 74–phenylalanine 93 form a helical membrane-spanning segment. The Cytoplasmic portion of the chain corresponds to glycine 94–glutamine 112. Residues leucine 113–glycine 131 traverse the membrane as a helical segment. Residues glutamate 132–lysine 170 lie on the Mitochondrial matrix side of the membrane. 2 positions are modified to N6-acetyllysine: lysine 148 and lysine 157. Lysine 170 bears the N6-acetyllysine; alternate mark. Lysine 170 is subject to N6-succinyllysine; alternate. Residues glycine 171–tyrosine 190 form a helical membrane-spanning segment. The Cytoplasmic portion of the chain corresponds to glutamate 191–arginine 211. The chain crosses the membrane as a helical span at residues valine 212–proline 230. Residues aspartate 231 to lysine 267 lie on the Mitochondrial matrix side of the membrane. The chain crosses the membrane as a helical span at residues glycine 268 to phenylalanine 287. Residues glutamate 288–leucine 301 are Cytoplasmic-facing.

Belongs to the mitochondrial carrier (TC 2.A.29) family.

The protein localises to the mitochondrion inner membrane. The enzyme catalyses O-acetyl-(R)-carnitine(in) + (R)-carnitine(out) = O-acetyl-(R)-carnitine(out) + (R)-carnitine(in). It catalyses the reaction an O-acyl-(R)-carnitine(in) + (R)-carnitine(out) = an O-acyl-(R)-carnitine(out) + (R)-carnitine(in). It carries out the reaction O-propanoyl-(R)-carnitine(in) + (R)-carnitine(out) = O-propanoyl-(R)-carnitine(out) + (R)-carnitine(in). The catalysed reaction is O-hexadecanoyl-(R)-carnitine(in) + (R)-carnitine(out) = O-hexadecanoyl-(R)-carnitine(out) + (R)-carnitine(in). The enzyme catalyses O-octanoyl-(R)-carnitine(in) + (R)-carnitine(out) = O-octanoyl-(R)-carnitine(out) + (R)-carnitine(in). It catalyses the reaction (R)-carnitine(in) = (R)-carnitine(out). In terms of biological role, mediates the electroneutral exchange of acylcarnitines (O-acyl-(R)-carnitine or L-acylcarnitine) of different acyl chain lengths (ranging from O-acetyl-(R)-carnitine to long-chain O-acyl-(R)-carnitines) with free carnitine ((R)-carnitine or L-carnitine) across the mitochondrial inner membrane, via a ping-pong mechanism. Key player in the mitochondrial oxidation pathway, it translocates the fatty acids in the form of acylcarnitines into the mitochondrial matrix, where the carnitine palmitoyltransferase 2 (CPT-2) activates them to undergo fatty acid beta-oxidation. Catalyzes the unidirectional transport (uniport) of carnitine at lower rates than the antiport (exchange). The polypeptide is Mitochondrial carnitine/acylcarnitine carrier protein (SLC25A20) (Macaca fascicularis (Crab-eating macaque)).